The sequence spans 398 residues: MRSGGTLFALIGSLMLLLLLRMLWCPADAPARSRLLMEGSREDTSGTSAALKTLWSPTTPVPRTRNSTYLDEKTTQITEKCKDLQYSLNSLSNKTRRYSEDDYLQTITNIQRCPWNRQAEEYDNFRAKLASCCDAIQDFVVSQNNTPVGTNMSYEVESKKHIPIRENIFHMFPVSQPFVDYPYNQCAVVGNGGILNKSLCGAEIDKSDFVFRCNLPPITGSASKDVGSKTNLVTVNPSIITLKYQNLKEKKAQFLEDISTYGDAFLLLPAFSYRANTGISFKVYQTLKESKMRQKVLFFHPRYLRHLALFWRTKGVTAYRLSTGLMIASVAVELCENVKLYGFWPFSKTIEDTPLSHHYYDNMLPKHGFHQMPKEYSQMLQLHMRGILKLQFSKCETA.

The Cytoplasmic portion of the chain corresponds to 1–3 (MRS). A helical; Signal-anchor for type II membrane protein membrane pass occupies residues 4 to 24 (GGTLFALIGSLMLLLLLRMLW). Over 25–398 (CPADAPARSR…KLQFSKCETA (374 aa)) the chain is Lumenal. N-linked (GlcNAc...) asparagine glycosylation is found at asparagine 66, asparagine 93, asparagine 151, and asparagine 196. Intrachain disulfides connect cysteine 186–cysteine 335 and cysteine 200–cysteine 395. Residues asparagine 214, 236–238 (NPS), and 322–324 (STG) each bind substrate. Histidine 370 (proton donor/acceptor) is an active-site residue.

The protein belongs to the glycosyltransferase 29 family. In terms of tissue distribution, highly expressed in kidney and expressed and all tissues tested.

It is found in the golgi apparatus membrane. It carries out the reaction a ganglioside GM3 + CMP-N-acetyl-beta-neuraminate = a ganglioside GD3 + CMP + H(+). The catalysed reaction is a ganglioside GM3 (d18:1(4E)) + CMP-N-acetyl-beta-neuraminate = a ganglioside GD3 (d18:1(4E)) + CMP + H(+). The enzyme catalyses a ganglioside GD1a (d18:1(4E)) + CMP-N-acetyl-beta-neuraminate = a ganglioside GT1a (d18:1(4E)) + CMP + H(+). It catalyses the reaction a ganglioside GD1a + CMP-N-acetyl-beta-neuraminate = a ganglioside GT1a + CMP + H(+). It carries out the reaction a ganglioside GM1b (d18:1(4E)) + CMP-N-acetyl-beta-neuraminate = a ganglioside GD1c (d18:1(4E)) + CMP + H(+). The catalysed reaction is a ganglioside GM1b + CMP-N-acetyl-beta-neuraminate = a ganglioside GD1c + CMP + H(+). The enzyme catalyses a ganglioside GM4 (d18:1(4E)) + CMP-N-acetyl-beta-neuraminate = an N-acetyl-alpha-neuraminosyl-(2-&gt;8)-N-acetyl-alpha-neuraminosyl-(2-&gt;3)-beta-D-galactosyl-(1&lt;-&gt;1')-N-acylsphing-4-enine + CMP + H(+). It catalyses the reaction N-acetyl-alpha-neuraminosyl-(2-&gt;3)-beta-D-galactosyl-(1&lt;-&gt;1')-ceramide + CMP-N-acetyl-beta-neuraminate = N-acetyl-alpha-neuraminosyl-(2-&gt;8)-N-acetyl-alpha-neuraminosyl-(2-&gt;3)-beta-D-galactosyl-(1&lt;-&gt;1')-ceramide + CMP + H(+). It carries out the reaction a ganglioside GT1b (d18:1(4E)) + CMP-N-acetyl-beta-neuraminate = a ganglioside GQ1b (d18:1(4E)) + CMP + H(+). The catalysed reaction is a ganglioside GT1b + CMP-N-acetyl-beta-neuraminate = a ganglioside GQ1b + CMP + H(+). The protein operates within protein modification; protein glycosylation. Alpha-2,8-sialyltransferase that prefers O-glycans to N-glycans or glycolipids as acceptor substrates. The minimal acceptor substrate is the NeuAc-alpha-2,3(6)-Gal sequence at the non-reducing end of their carbohydrate groups. In Mus musculus (Mouse), this protein is Alpha-2,8-sialyltransferase 8F.